Here is a 636-residue protein sequence, read N- to C-terminus: Tumor protein p73 (636 aa).

The interval 1–46 (MAQSTATSPDGGTTFEHLWSSLEPDSTYFDLPQSSRGNNEVVGGTD) is transactivation. The residue at position 27 (Thr-27) is a Phosphothreonine; by PLK1. Phosphotyrosine; by SRC and HCK is present on Tyr-28. The segment at 78–104 (RAASASPYTPEHAASVPTHSPYAQPSS) is disordered. Polar residues predominate over residues 94–104 (PTHSPYAQPSS). A Phosphotyrosine; by ABL1 modification is found at Tyr-99. The DNA-binding stretch occupies residues 131–310 (FQQSSTAKSA…DRKADEDHYR (180 aa)). Cys-194, His-197, Cys-258, and Cys-262 together coordinate Zn(2+). The disordered stretch occupies residues 314 to 345 (ALNESSAKNGAASKRAFKQSPPAVPALGAGVK). Residues 345-380 (KKRRHGDEDTYYLQVRGRENFEILMKLKESLELMEL) form an interaction with HIPK2 region. Residues 345–386 (KKRRHGDEDTYYLQVRGRENFEILMKLKESLELMELVPQPLV) are oligomerization. Residues 483–487 (PPPPY) carry the PPxY motif motif. One can recognise an SAM domain in the interval 485-551 (PPYHADPSLV…WRGLQDLKQG (67 aa)). Lys-627 is covalently cross-linked (Glycyl lysine isopeptide (Lys-Gly) (interchain with G-Cter in SUMO); in isoform Alpha). Residue Lys-627 forms a Glycyl lysine isopeptide (Lys-Gly) (interchain with G-Cter in SUMO2) linkage.

This sequence belongs to the p53 family. As to quaternary structure, found in a complex with p53/TP53 and CABLES1. The C-terminal oligomerization domain binds to the ABL1 tyrosine kinase SH3 domain. Interacts with HECW2. Isoform Beta interacts homotypically and with p53/TP53, whereas isoform Alpha does not. Isoform Gamma interacts homotypically and with all p73 isoforms. Isoform Delta interacts with isoform Gamma, isoform Alpha, and homotypically. Isoforms Alpha and Beta interact with HIPK2. Isoform Alpha interacts with RANBP9. Isoform Beta interacts with WWOX. Interacts (via SAM domain) with FBXO45 (via B30.2/SPRY domain). Interacts with YAP1 (phosphorylated form). Interacts with HCK (via SH3 domain); this inhibits TP73 activity and degradation. Interacts (via SAM domain) with NQO1; this interaction is NADH-dependent, stabilizes TP73 in response to oxidative stress and protects it from ubiquitin-independent degradation by the 20S proteasome. (Microbial infection) Interacts with Epstein-Barr virus protein EBNA6; this interaction inhibits TP73-mediated apoptotic pathway. Requires Zn(2+) as cofactor. Post-translationally, isoform alpha (but not isoform beta) is sumoylated on Lys-627, which potentiates proteasomal degradation but does not affect transcriptional activity. Phosphorylation by PLK1 and PLK3 inhibits the transcription regulator activity and pro-apoptotic function. Higher levels of phosphorylation seen in the brain from patients with Huntington disease. In terms of processing, polyubiquitinated by RCHY1/PIRH2; leading to its degradation by the proteasome. Expressed in striatal neurons of patients with Huntington disease (at protein level). Brain, kidney, placenta, colon, heart, liver, spleen, skeletal muscle, prostate, thymus and pancreas. Highly expressed in fetal tissue. Expressed in the respiratory epithelium.

The protein resides in the nucleus. It is found in the cytoplasm. Functionally, participates in the apoptotic response to DNA damage. Isoforms containing the transactivation domain are pro-apoptotic, isoforms lacking the domain are anti-apoptotic and block the function of p53 and transactivating p73 isoforms. May be a tumor suppressor protein. Is an activator of FOXJ1 expression. It is an essential factor for the positive regulation of lung ciliated cell differentiation. The sequence is that of Tumor protein p73 (TP73) from Homo sapiens (Human).